Reading from the N-terminus, the 130-residue chain is Protein p56 (130 aa).

Belongs to the phi29likevirus protein p56 family. In terms of assembly, homodimer. Interacts with host UDG; this interaction inhibits the uracil-DNA glycosylase.

Its function is as follows. Inhibits the host uracil-DNA glycosylase (UDG), an enzyme which removes uracil residues from DNA by the base excision repair. Interacts with host uracil-DNA glycosylase and prevents the latter from binding to DNA. Since the viral DNA polymerase efficiently incorporates dUMP into DNA, the virus needs to prevent the deleterious effect caused by host UDG when it eliminates uracil residues present in the viral genome. The sequence is that of Protein p56 from Bacillus phage GA-1 (Bacteriophage GA-1).